The sequence spans 350 residues: SUMO-activating enzyme subunit 1 (350 aa).

An N-acetylmethionine modification is found at Met1. N-acetylvaline; in SUMO-activating enzyme subunit 1, N-terminally processed is present on Val2. Ser16 carries the phosphoserine modification. Residue Lys202 is modified to N6-acetyllysine.

It belongs to the ubiquitin-activating E1 family. As to quaternary structure, heterodimer of SAE1 and UBA2/SAE2. The heterodimer corresponds to the two domains that are encoded on a single polypeptide chain in ubiquitin-activating enzyme E1. Interacts with UBE2I. Broadly expressed, with highest levels in testis.

The protein localises to the nucleus. The protein operates within protein modification; protein sumoylation. The heterodimer acts as an E1 ligase for SUMO1, SUMO2, SUMO3, and probably SUMO4. It mediates ATP-dependent activation of SUMO proteins followed by formation of a thioester bond between a SUMO protein and a conserved active site cysteine residue on UBA2/SAE2. The chain is SUMO-activating enzyme subunit 1 (Sae1) from Mus musculus (Mouse).